The chain runs to 640 residues: Chaperone protein dnaK2 (640 aa).

At Thr197 the chain carries Phosphothreonine; by autocatalysis. Residues 605 to 640 (VYQSAQSSDGTGSSSSGGSGSGGDDEVIDAEFSETK) are disordered. Residues 627 to 640 (GDDEVIDAEFSETK) are compositionally biased toward acidic residues.

The protein belongs to the heat shock protein 70 family.

In terms of biological role, acts as a chaperone. This chain is Chaperone protein dnaK2 (dnaK2), found in Thermosynechococcus vestitus (strain NIES-2133 / IAM M-273 / BP-1).